The following is a 183-amino-acid chain: Putative ribosomal N-acetyltransferase YdaF (183 aa).

The region spanning 10 to 176 is the N-acetyltransferase domain; that stretch reads ITIRLLEPKD…HDLVYYSLLK (167 aa).

The protein belongs to the acetyltransferase family. Homohexamer, and homodimer.

In terms of biological role, putative N-acetyltransferase. May act on ribosomal proteins (Potential). The chain is Putative ribosomal N-acetyltransferase YdaF (ydaF) from Bacillus subtilis (strain 168).